The following is a 1034-amino-acid chain: Ice nucleation protein InaU (1034 aa).

Residues 162 to 993 (ATYGSTLSGT…LTAGENSVLI (832 aa)) are octapeptide periodicity. Disordered stretches follow at residues 260–287 (YGST…KGSD), 311–342 (TQTA…GYGS), 356–383 (YGST…KGSD), 407–438 (TQTA…GYGS), 452–480 (YGST…GSDL), and 570–597 (AREG…TGYG). Composition is skewed to polar residues over residues 261-286 (GSTQ…QKGS), 311-334 (TQTA…QKGS), 357-382 (GSTQ…QKGS), 407-430 (TQTA…QKGS), 453-480 (GSTQ…GSDL), and 580-592 (YGST…NSDL).

This sequence belongs to the bacterial ice nucleation protein family.

The protein resides in the cell outer membrane. Ice nucleation proteins enable bacteria to nucleate crystallization in supercooled water. The chain is Ice nucleation protein InaU (inaU) from Pantoea ananas (Erwinia uredovora).